The chain runs to 658 residues: Cysteine-rich receptor-like protein kinase 36 (658 aa).

The N-terminal stretch at 1–26 is a signal peptide; sequence MERSNLFHIPCFLLLFLLFNINGVHT. 2 consecutive Gnk2-homologous domains span residues 27 to 128 and 139 to 246; these read TFVC…NIHR and NVPH…DYRF. Over 27–281 the chain is Extracellular; that stretch reads TFVCGDEDFS…KKGRMFQPWS (255 aa). Asparagine 38, asparagine 64, asparagine 116, asparagine 150, and asparagine 163 each carry an N-linked (GlcNAc...) asparagine glycan. Residues 282–302 traverse the membrane as a helical segment; that stretch reads VVVVVFPTGINLAVFVAFVLA. Over 303 to 658 the chain is Cytoplasmic; the sequence is YRRMRRRIYT…EVSITVLYPR (356 aa). Residues 340-612 form the Protein kinase domain; the sequence is FSLENKLGQG…ITWLARDGTF (273 aa). Residues 346 to 354 and lysine 368 each bind ATP; that span reads LGQGGFGSV. At tyrosine 413 the chain carries Phosphotyrosine. Aspartate 465 acts as the Proton acceptor in catalysis. Serine 469 is modified (phosphoserine). At threonine 505 the chain carries Phosphothreonine. Position 513 is a phosphotyrosine (tyrosine 513).

It belongs to the protein kinase superfamily. Ser/Thr protein kinase family. CRK subfamily. Interacts with CRK45. In terms of processing, autophosphorylated.

The protein resides in the cell membrane. It carries out the reaction L-seryl-[protein] + ATP = O-phospho-L-seryl-[protein] + ADP + H(+). The catalysed reaction is L-threonyl-[protein] + ATP = O-phospho-L-threonyl-[protein] + ADP + H(+). Forms a complex with CRK45 that may negatively control abscisic acid (ABA) and osmotic stress signal transduction. Can phosphorylate CRK45 in vitro. The sequence is that of Cysteine-rich receptor-like protein kinase 36 from Arabidopsis thaliana (Mouse-ear cress).